The following is a 526-amino-acid chain: Tyrosine-protein kinase transforming protein Src (526 aa).

The disordered stretch occupies residues 1–57; the sequence is MGSSKSKPKDPSQRRCSLEPPDSTHHGGFPASQTPNKTAAPDTHRTPSRSFGTVATE. Gly-2 carries the N-myristoyl glycine; by host lipid modification. A compositionally biased stretch (basic and acidic residues) spans 7-25; sequence KPKDPSQRRCSLEPPDSTH. The SH3 domain maps to 81 to 142; it reads GGVTTFVALY…PSNYVAPSDS (62 aa). Residues 148–245 enclose the SH2 domain; the sequence is WYFGKITRRE…GLCHRLTNVC (98 aa). One can recognise a Protein kinase domain in the interval 267–517; the sequence is LRLEVKLGQG…TFEYLQAQLL (251 aa). Residues 273-281 and Lys-295 each bind ATP; that span reads LGQGCFGEV. The active-site Proton acceptor is Asp-386. Position 416 is a phosphotyrosine; by autocatalysis (Tyr-416).

The protein belongs to the protein kinase superfamily. Tyr protein kinase family. SRC subfamily. Post-translationally, the phosphorylated form is termed pp60v-src.

The catalysed reaction is L-tyrosyl-[protein] + ATP = O-phospho-L-tyrosyl-[protein] + ADP + H(+). Functionally, this phosphoprotein, required for both the initiation and the maintenance of neoplastic transformation, is a protein kinase that catalyzes the phosphorylation of tyrosine residues in vitro. This is Tyrosine-protein kinase transforming protein Src (V-SRC) from Galliformes.